A 150-amino-acid chain; its full sequence is Deoxyuridine 5'-triphosphate nucleotidohydrolase (150 aa).

Substrate-binding positions include 70-72 (RSG), Asn82, 86-88 (LID), and Met96.

This sequence belongs to the dUTPase family. Mg(2+) serves as cofactor.

It carries out the reaction dUTP + H2O = dUMP + diphosphate + H(+). It functions in the pathway pyrimidine metabolism; dUMP biosynthesis; dUMP from dCTP (dUTP route): step 2/2. Its function is as follows. This enzyme is involved in nucleotide metabolism: it produces dUMP, the immediate precursor of thymidine nucleotides and it decreases the intracellular concentration of dUTP so that uracil cannot be incorporated into DNA. The sequence is that of Deoxyuridine 5'-triphosphate nucleotidohydrolase from Baumannia cicadellinicola subsp. Homalodisca coagulata.